We begin with the raw amino-acid sequence, 624 residues long: MTQAEKGDTENGKEKGGEKEKEQRGVKRPIVPALVPESLQEQIQSNFIIVIHPGSTTLRIGRATDTLPASIPHVIARRHKQQGQPLYKDSWLLREGLNKPESNEQRQNGLKMVDQAIWSKKMSNGTRRIPVSPEQARSYNKQMRPAILDHCSGNKWTNTSHHPEYLVGEEALYVNPLDCYNIHWPIRRGQLNIHPGPGGSLTAVLADIEVIWSHAIQKYLEIPLKDLKYYRCILLIPDIYNKQHVKELVNMILMKMGFSGIVVHQESVCATYGSGLSSTCIVDVGDQKTSVCCVEDGVSHRNTRLCLAYGGSDVSRCFYWLMQRAGFPYRECQLTNKMDCLLLQHLKETFCHLDQDISGLQDHEFQIRHPDSPALLYQFRLGDEKLQAPMALFYPATFGIVGQKMTTLQHRSQGDPEDPHDEHYLLATQSKQEQSAKATADRKSASKPIGFEGDLRGQSSDLPERLHSQEVDLGSAQGDGLMAGNDSEEALTALMSRKTAISLFEGKALGLDKAILHSIDCCSSDDTKKKMYSSILVVGGGLMFHKAQEFLQHRILNKMPPSFRRIIENVDVITRPKDMDPRLIAWKGGAVLACLDTTQELWIYQREWQRFGVRMLRERAAFVW.

The residue at position 1 (M1) is an N-acetylmethionine. Residues 1 to 25 (MTQAEKGDTENGKEKGGEKEKEQRG) are compositionally biased toward basic and acidic residues. The tract at residues 1–29 (MTQAEKGDTENGKEKGGEKEKEQRGVKRP) is disordered. Residues S55 and T56 each coordinate ATP. S132 carries the post-translational modification Phosphoserine. 283–286 (DVGD) is an ATP binding site. S412 bears the Phosphoserine mark. A disordered region spans residues 430–462 (SKQEQSAKATADRKSASKPIGFEGDLRGQSSDL).

Belongs to the actin family. ARP8 subfamily. In terms of assembly, component of the chromatin remodeling INO80 complex; specifically part of a complex module associated with the DBINO domain of INO80. Interacts with ACTR5; the interaction is observed in asynchronous (interphase) cells but not in metaphase-arrested cells indicative for a possible dissociation of the INO80 complex in mitotic cells. Exists as monomers and dimers, but the dimer is most probably the biologically relevant form required for stable interactions with histones that exploits the twofold symmetry of the nucleosome core.

Its subcellular location is the nucleus. It is found in the chromosome. Plays an important role in the functional organization of mitotic chromosomes. Exhibits low basal ATPase activity, and unable to polymerize. Functionally, proposed core component of the chromatin remodeling INO80 complex which is involved in transcriptional regulation, DNA replication and probably DNA repair. Required for the recruitment of INO80 (and probably the INO80 complex) to sites of DNA damage. Strongly prefer nucleosomes and H3-H4 tetramers over H2A-H2B dimers, suggesting it may act as a nucleosome recognition module within the complex. This is Actin-related protein 8 (ACTR8) from Homo sapiens (Human).